A 278-amino-acid polypeptide reads, in one-letter code: 2-dehydro-3-deoxyphosphooctonate aldolase (278 aa).

It belongs to the KdsA family.

The protein resides in the cytoplasm. It carries out the reaction D-arabinose 5-phosphate + phosphoenolpyruvate + H2O = 3-deoxy-alpha-D-manno-2-octulosonate-8-phosphate + phosphate. The protein operates within carbohydrate biosynthesis; 3-deoxy-D-manno-octulosonate biosynthesis; 3-deoxy-D-manno-octulosonate from D-ribulose 5-phosphate: step 2/3. Its pathway is bacterial outer membrane biogenesis; lipopolysaccharide biosynthesis. The polypeptide is 2-dehydro-3-deoxyphosphooctonate aldolase (Koribacter versatilis (strain Ellin345)).